We begin with the raw amino-acid sequence, 362 residues long: Talin rod domain-containing protein 1 (362 aa).

The disordered stretch occupies residues 1-26 (MASGSAGKPTGEAASPAPASAIGGAS). Alanine 2 is modified (N-acetylalanine). A compositionally biased stretch (low complexity) spans 13 to 26 (AASPAPASAIGGAS).

May homodimerize. Interacts with F-actin.

Actin-binding protein which may have an oncogenic function and regulates cell proliferation, migration and invasion in cancer cells. The sequence is that of Talin rod domain-containing protein 1 from Homo sapiens (Human).